A 236-amino-acid polypeptide reads, in one-letter code: Ribose-5-phosphate isomerase A (236 aa).

Substrate contacts are provided by residues 29 to 32 (SGST), 86 to 89 (DGAD), and 99 to 102 (KGGG). E108 (proton acceptor) is an active-site residue. Residue K126 coordinates substrate.

It belongs to the ribose 5-phosphate isomerase family. As to quaternary structure, homodimer.

The enzyme catalyses aldehydo-D-ribose 5-phosphate = D-ribulose 5-phosphate. It functions in the pathway carbohydrate degradation; pentose phosphate pathway; D-ribose 5-phosphate from D-ribulose 5-phosphate (non-oxidative stage): step 1/1. In terms of biological role, catalyzes the reversible conversion of ribose-5-phosphate to ribulose 5-phosphate. The protein is Ribose-5-phosphate isomerase A of Prochlorococcus marinus (strain NATL1A).